The sequence spans 134 residues: uncharacterized protein (134 aa).

This is an uncharacterized protein from Streptomyces coelicolor (strain ATCC BAA-471 / A3(2) / M145).